Consider the following 479-residue polypeptide: Preferentially expressed antigen in melanoma-like protein 7 (479 aa).

Residues 96–124 (MGRLKKVDFRDAQHHASLDMQDEREGRDY) form an LRR 1; degenerate repeat. The LRR 2; degenerate repeat unit spans residues 179–203 (HLCCEKLEIGAVEVSKVRNVLKFLQ). One copy of the LRR 3; degenerate repeat lies at 204 to 230 (PELIKELKLNTVGNLSKLAKFVPFIRK). Residues 231 to 265 (MRNLQKLMLVRTFGTRTFTQEEKQNISKIISLFCK) form an LRR 4; degenerate repeat. LRR repeat units follow at residues 266-291 (LSCL…LRCL), 292-323 (EAPL…SQLK), 324-347 (HLCL…LKRV), 348-375 (AANL…ALIK), and 376-400 (CTQL…FLHR).

It belongs to the PRAME family. Interacts with UHRF1. In terms of tissue distribution, seems to be specific to pluripotent tissues in the early embryo. Not detected in somatic tissues.

Functionally, promotes maintenance and self-renewal of pluripotent embryonic stem cells (ESCs), downstream of LIF/STAT3. Maintains the pluripotency state of ESCs by repressing DNA methylation through the regulation of UHRF1 stability. Mediates the proteasomal degradation of UHRF1. Is required for the establishment of the blastocyst. In Mus musculus (Mouse), this protein is Preferentially expressed antigen in melanoma-like protein 7.